We begin with the raw amino-acid sequence, 647 residues long: UvrABC system protein C (647 aa).

A GIY-YIG domain is found at 16 to 95 (VEPGVYRFRD…IKEFDPRFNV (80 aa)). The UVR domain maps to 208 to 243 (DRYARELEQQMNAAAENLDFERAARLRDDRSALKRA).

Belongs to the UvrC family. In terms of assembly, interacts with UvrB in an incision complex.

It localises to the cytoplasm. Functionally, the UvrABC repair system catalyzes the recognition and processing of DNA lesions. UvrC both incises the 5' and 3' sides of the lesion. The N-terminal half is responsible for the 3' incision and the C-terminal half is responsible for the 5' incision. The chain is UvrABC system protein C from Mycobacterium marinum (strain ATCC BAA-535 / M).